Consider the following 408-residue polypeptide: Neutral cholesterol ester hydrolase 1 (408 aa).

The Cytoplasmic portion of the chain corresponds to 1–4 (MRSS). Residues 5 to 25 (CVLLTALLALAAYYIYIPLPS) traverse the membrane as a helical; Signal-anchor for type II membrane protein segment. The Lumenal segment spans residues 26–408 (SVSDPWKLML…SYIKWLDQNL (383 aa)). The Involved in the stabilization of the negatively charged intermediate by the formation of the oxyanion hole motif lies at 113–115 (HGG). Serine 191 is an active-site residue. N-linked (GlcNAc...) asparagine glycosylation is found at asparagine 270 and asparagine 287. Active-site residues include aspartate 348 and histidine 378. Residue asparagine 389 is glycosylated (N-linked (GlcNAc...) asparagine).

This sequence belongs to the 'GDXG' lipolytic enzyme family. In terms of processing, N-glycosylated.

The protein resides in the cell membrane. The protein localises to the microsome. The catalysed reaction is a 1-O-alkyl-2-acetyl-sn-glycerol + H2O = a 1-O-alkyl-sn-glycerol + acetate + H(+). It carries out the reaction 1-O-hexadecyl-2-acetyl-sn-glycerol + H2O = 1-O-hexadecyl-sn-glycerol + acetate + H(+). It catalyses the reaction a cholesterol ester + H2O = cholesterol + a fatty acid + H(+). The enzyme catalyses cholesteryl (9Z-octadecenoate) + H2O = cholesterol + (9Z)-octadecenoate + H(+). In terms of biological role, hydrolyzes 2-acetyl monoalkylglycerol ether (1-O-alkyl-2-acetyl-sn-glycerol), the penultimate precursor of the pathway for de novo synthesis of platelet-activating factor. May be responsible for the hydrolysis of cholesterol esters (such as cholesteryl (9Z-octadecenoate)) in macrophages. Also involved in organ detoxification by hydrolyzing exogenous organophosphorus compounds. The polypeptide is Neutral cholesterol ester hydrolase 1 (NCEH1) (Bos taurus (Bovine)).